The chain runs to 584 residues: MAEYTAGTSPLVDLINSLPDSDGTWGPPITNETTLNGVPYAPFSKSDKLGRMADWTDAKDGRDGRGRQQYNRNYRDQQVYGAGSASLFAPPAAEDEASFSVVSNVRDTGKTRFGRGAIFTRGRGQRGRGGQDTRGGGRQQFQRGGRGGQQYGGGGYSDRGGGRGGGARGRRFGWKDYDKPQRNRDASVNIRPDWKLLEEIDYNRLSKLNLDTDEGEDVDSYGFLYYYDRSYDKPPVKSAERKLAVVDRAVYNVTTSSDPIIQELAEKDEATIFATDSILSMLMCAPRSMYPWDIIIVRQGNKVFLDKRDNAALDMVTVNENAADAPLEASEGSKDVINQPGALAEEATYINHNFVNQVVLESSNQKVDMANENPFHSASEETEPPASKAYKYRRFDLSTSEETPTYLVVRTELDAVQKNPTSGEDQFVTVHALNEFDSKAQGSGGALDWRTKLVSQRGAVVATEMKNNSCKLARWTVQSILAKADVMKLGFVSRVTPKANDKHVILGCVGWKPKDFANQMNLQLSNGWGIVRTIADMCLQREEGKYVLVKDPNKNILRLYEVPANGLDDDDEGPEPEGVAEEED.

Residues 118–184 (IFTRGRGQRG…KDYDKPQRNR (67 aa)) form a disordered region. Over residues 127–167 (GRGGQDTRGGGRQQFQRGGRGGQQYGGGGYSDRGGGRGGGA) the composition is skewed to gly residues. A compositionally biased stretch (basic and acidic residues) spans 173–184 (GWKDYDKPQRNR). The segment at 312 to 326 (ALDMVTVNENAADAP) is RNA gate. Positions 563-584 (PANGLDDDDEGPEPEGVAEEED) are disordered. The span at 567–584 (LDDDDEGPEPEGVAEEED) shows a compositional bias: acidic residues.

It belongs to the eIF-3 subunit D family. Component of the eukaryotic translation initiation factor 3 (eIF-3) complex.

The protein resides in the cytoplasm. Its function is as follows. mRNA cap-binding component of the eukaryotic translation initiation factor 3 (eIF-3) complex, which is involved in protein synthesis of a specialized repertoire of mRNAs and, together with other initiation factors, stimulates binding of mRNA and methionyl-tRNAi to the 40S ribosome. The eIF-3 complex specifically targets and initiates translation of a subset of mRNAs involved in cell proliferation. In the eIF-3 complex, eif3d specifically recognizes and binds the 7-methylguanosine cap of a subset of mRNAs. The polypeptide is Eukaryotic translation initiation factor 3 subunit D (Chaetomium globosum (strain ATCC 6205 / CBS 148.51 / DSM 1962 / NBRC 6347 / NRRL 1970) (Soil fungus)).